A 316-amino-acid polypeptide reads, in one-letter code: Putative S-adenosyl-L-methionine-dependent methyltransferase MAB_4606c (316 aa).

S-adenosyl-L-methionine contacts are provided by residues aspartate 137 and 166–167 (DL).

This sequence belongs to the UPF0677 family.

Functionally, exhibits S-adenosyl-L-methionine-dependent methyltransferase activity. In Mycobacteroides abscessus (strain ATCC 19977 / DSM 44196 / CCUG 20993 / CIP 104536 / JCM 13569 / NCTC 13031 / TMC 1543 / L948) (Mycobacterium abscessus), this protein is Putative S-adenosyl-L-methionine-dependent methyltransferase MAB_4606c.